We begin with the raw amino-acid sequence, 267 residues long: Thiazole synthase (267 aa).

Catalysis depends on Lys110, which acts as the Schiff-base intermediate with DXP. 1-deoxy-D-xylulose 5-phosphate-binding positions include Gly171, 197–198, and 219–220; these read AG and NT.

It belongs to the ThiG family. Homotetramer. Forms heterodimers with either ThiH or ThiS.

It localises to the cytoplasm. It carries out the reaction [ThiS sulfur-carrier protein]-C-terminal-Gly-aminoethanethioate + 2-iminoacetate + 1-deoxy-D-xylulose 5-phosphate = [ThiS sulfur-carrier protein]-C-terminal Gly-Gly + 2-[(2R,5Z)-2-carboxy-4-methylthiazol-5(2H)-ylidene]ethyl phosphate + 2 H2O + H(+). Its pathway is cofactor biosynthesis; thiamine diphosphate biosynthesis. Its function is as follows. Catalyzes the rearrangement of 1-deoxy-D-xylulose 5-phosphate (DXP) to produce the thiazole phosphate moiety of thiamine. Sulfur is provided by the thiocarboxylate moiety of the carrier protein ThiS. In vitro, sulfur can be provided by H(2)S. In Maricaulis maris (strain MCS10) (Caulobacter maris), this protein is Thiazole synthase.